A 213-amino-acid chain; its full sequence is Thiamine-phosphate synthase (213 aa).

4-amino-2-methyl-5-(diphosphooxymethyl)pyrimidine contacts are provided by residues Gln40 to Lys44 and Asn75. Mg(2+) contacts are provided by Asp76 and Asp95. 4-amino-2-methyl-5-(diphosphooxymethyl)pyrimidine is bound at residue Ser113. Thr139–Ser141 contributes to the 2-[(2R,5Z)-2-carboxy-4-methylthiazol-5(2H)-ylidene]ethyl phosphate binding site. A 4-amino-2-methyl-5-(diphosphooxymethyl)pyrimidine-binding site is contributed by Lys142. 2-[(2R,5Z)-2-carboxy-4-methylthiazol-5(2H)-ylidene]ethyl phosphate-binding positions include Gly171 and Ile191–Ser192.

The protein belongs to the thiamine-phosphate synthase family. The cofactor is Mg(2+).

It catalyses the reaction 2-[(2R,5Z)-2-carboxy-4-methylthiazol-5(2H)-ylidene]ethyl phosphate + 4-amino-2-methyl-5-(diphosphooxymethyl)pyrimidine + 2 H(+) = thiamine phosphate + CO2 + diphosphate. It carries out the reaction 2-(2-carboxy-4-methylthiazol-5-yl)ethyl phosphate + 4-amino-2-methyl-5-(diphosphooxymethyl)pyrimidine + 2 H(+) = thiamine phosphate + CO2 + diphosphate. The catalysed reaction is 4-methyl-5-(2-phosphooxyethyl)-thiazole + 4-amino-2-methyl-5-(diphosphooxymethyl)pyrimidine + H(+) = thiamine phosphate + diphosphate. Its pathway is cofactor biosynthesis; thiamine diphosphate biosynthesis; thiamine phosphate from 4-amino-2-methyl-5-diphosphomethylpyrimidine and 4-methyl-5-(2-phosphoethyl)-thiazole: step 1/1. Condenses 4-methyl-5-(beta-hydroxyethyl)thiazole monophosphate (THZ-P) and 2-methyl-4-amino-5-hydroxymethyl pyrimidine pyrophosphate (HMP-PP) to form thiamine monophosphate (TMP). The polypeptide is Thiamine-phosphate synthase (Staphylococcus aureus (strain MRSA252)).